The sequence spans 512 residues: 2,3-bisphosphoglycerate-independent phosphoglycerate mutase (512 aa).

Positions 11 and 61 each coordinate Mn(2+). Serine 61 acts as the Phosphoserine intermediate in catalysis. Substrate contacts are provided by residues histidine 122, 152–153, arginine 184, arginine 190, 259–262, and lysine 332; these read RD and RADR. The Mn(2+) site is built by aspartate 399, histidine 403, aspartate 440, histidine 441, and histidine 459.

This sequence belongs to the BPG-independent phosphoglycerate mutase family. As to quaternary structure, monomer. Mn(2+) is required as a cofactor.

The enzyme catalyses (2R)-2-phosphoglycerate = (2R)-3-phosphoglycerate. The protein operates within carbohydrate degradation; glycolysis; pyruvate from D-glyceraldehyde 3-phosphate: step 3/5. Catalyzes the interconversion of 2-phosphoglycerate and 3-phosphoglycerate. The chain is 2,3-bisphosphoglycerate-independent phosphoglycerate mutase from Francisella tularensis subsp. tularensis (strain FSC 198).